The following is an 859-amino-acid chain: Cadherin-related family member 1 (859 aa).

An N-terminal signal peptide occupies residues 1 to 19; sequence MRRCRWAALALGLLRLCLA. Over 20–700 the chain is Extracellular; that stretch reads QANFAPHFFD…LIQTKDNPMK (681 aa). Cadherin domains follow at residues 36-135, 136-246, 247-353, 359-472, 473-576, and 573-688; these read NGNM…APRF, IQEP…APVF, VGTP…PPTF, PQNR…VPKF, DSLY…PPQF, and PPQF…SPMA. N-linked (GlcNAc...) asparagine glycosylation is found at Asn-58 and Asn-89. Asn-296 is a glycosylation site (N-linked (GlcNAc...) asparagine). Residues 701 to 721 form a helical membrane-spanning segment; sequence AVGVLAGTMATVVAITVLIST. Residues 722 to 859 are Cytoplasmic-facing; that stretch reads ATFWRNKKSN…KKSVHNKAYF (138 aa). Positions 770–838 are disordered; the sequence is KEKPPNENCN…PKTMGSPVQS (69 aa). Residues 775–791 are compositionally biased toward low complexity; the sequence is NENCNNNSPESSLLPRA.

Interacts with PROM1. Undergoes proteolytic cleavage; produces a soluble 95 kDa N-terminal fragment and a 25 kDa cell-associated C-terminal fragment.

It is found in the cell membrane. Potential calcium-dependent cell-adhesion protein. May be required for the structural integrity of the outer segment (OS) of photoreceptor cells. The protein is Cadherin-related family member 1 of Homo sapiens (Human).